Here is a 139-residue protein sequence, read N- to C-terminus: Transcription antitermination protein NusB (139 aa).

This sequence belongs to the NusB family.

Involved in transcription antitermination. Required for transcription of ribosomal RNA (rRNA) genes. Binds specifically to the boxA antiterminator sequence of the ribosomal RNA (rrn) operons. This chain is Transcription antitermination protein NusB, found in Escherichia coli (strain K12 / MC4100 / BW2952).